The primary structure comprises 217 residues: Proteasome subunit beta type-6-A like protein (217 aa).

The propeptide at 1-16 is removed in mature form; the sequence is MERHLMDSQIKGVSTG. Thr17 functions as the Nucleophile in the catalytic mechanism.

This sequence belongs to the peptidase T1B family. The 26S proteasome consists of a 20S proteasome core and two 19S regulatory subunits. The 20S proteasome core is composed of 28 subunits that are arranged in four stacked rings, resulting in a barrel-shaped structure. The two end rings are each formed by seven alpha subunits, and the two central rings are each formed by seven beta subunits. The catalytic chamber with the active sites is on the inside of the barrel.

The protein localises to the cytoplasm. The protein resides in the nucleus. It catalyses the reaction Cleavage of peptide bonds with very broad specificity.. Its function is as follows. The proteasome is a multicatalytic proteinase complex which is characterized by its ability to cleave peptides with Arg, Phe, Tyr, Leu, and Glu adjacent to the leaving group at neutral or slightly basic pH. The proteasome has an ATP-dependent proteolytic activity. This subunit is involved in antigen processing to generate class I binding peptides. The chain is Proteasome subunit beta type-6-A like protein (psmb6l-a) from Salmo salar (Atlantic salmon).